A 96-amino-acid polypeptide reads, in one-letter code: Neutrophil defensin 3 (96 aa).

The signal sequence occupies residues Met-1–Ala-19. Residues Glu-20–Met-66 constitute a propeptide that is removed on maturation. 3 disulfide bridges follow: Cys-68–Cys-96, Cys-70–Cys-85, and Cys-75–Cys-95.

The protein localises to the secreted. Its function is as follows. Has bacteriostatic activity against Gram-positive bacteria S.aureus and L.monocytogenes and Gram-negative bacterium E.coli and antifungal activity against C.neoformans. The sequence is that of Neutrophil defensin 3 from Macaca mulatta (Rhesus macaque).